Here is a 677-residue protein sequence, read N- to C-terminus: Probable serine/threonine-protein kinase mkcF (677 aa).

The SH3 domain maps to Met-1–Arg-58. Residues Thr-72 to Arg-244 are disordered. Residues Gly-79–Thr-94 are compositionally biased toward low complexity. The segment covering Gly-105–Gln-126 has biased composition (polar residues). Residues Ser-127 to Asn-146 are compositionally biased toward low complexity. The span at Thr-158–Phe-174 shows a compositional bias: polar residues. Positions Ser-175–Ser-192 are enriched in low complexity. Residues Asp-209–Tyr-224 show a composition bias toward basic and acidic residues. Positions Ser-230 to Ser-240 are enriched in low complexity. The 246-residue stretch at Ile-401 to Phe-646 folds into the Protein kinase domain. ATP contacts are provided by residues Val-407–Val-415 and Lys-428. Asp-519 serves as the catalytic Proton acceptor.

This sequence belongs to the protein kinase superfamily. Ser/Thr protein kinase family. STE20 subfamily. Mg(2+) is required as a cofactor.

The catalysed reaction is L-seryl-[protein] + ATP = O-phospho-L-seryl-[protein] + ADP + H(+). It carries out the reaction L-threonyl-[protein] + ATP = O-phospho-L-threonyl-[protein] + ADP + H(+). The polypeptide is Probable serine/threonine-protein kinase mkcF (Dictyostelium discoideum (Social amoeba)).